A 190-amino-acid chain; its full sequence is Large ribosomal subunit protein uL5 (190 aa).

It belongs to the universal ribosomal protein uL5 family. In terms of assembly, part of the 50S ribosomal subunit; part of the 5S rRNA/L5/L18/L25 subcomplex. Contacts the 5S rRNA and the P site tRNA. Forms a bridge to the 30S subunit in the 70S ribosome.

Its function is as follows. This is one of the proteins that bind and probably mediate the attachment of the 5S RNA into the large ribosomal subunit, where it forms part of the central protuberance. In the 70S ribosome it contacts protein S13 of the 30S subunit (bridge B1b), connecting the 2 subunits; this bridge is implicated in subunit movement. Contacts the P site tRNA; the 5S rRNA and some of its associated proteins might help stabilize positioning of ribosome-bound tRNAs. The protein is Large ribosomal subunit protein uL5 of Blochmanniella floridana.